A 122-amino-acid polypeptide reads, in one-letter code: Large ribosomal subunit protein uL14 (122 aa).

The protein belongs to the universal ribosomal protein uL14 family. As to quaternary structure, part of the 50S ribosomal subunit. Forms a cluster with proteins L3 and L19. In the 70S ribosome, L14 and L19 interact and together make contacts with the 16S rRNA in bridges B5 and B8.

In terms of biological role, binds to 23S rRNA. Forms part of two intersubunit bridges in the 70S ribosome. In Thermoanaerobacter pseudethanolicus (strain ATCC 33223 / 39E) (Clostridium thermohydrosulfuricum), this protein is Large ribosomal subunit protein uL14.